A 1148-amino-acid polypeptide reads, in one-letter code: Putative ATP-dependent RNA helicase rha-2 (1148 aa).

Over residues 1–10 (MGKRKTKEDN) the composition is skewed to basic and acidic residues. Disordered regions lie at residues 1 to 51 (MGKR…FAKE) and 101 to 163 (STKL…DAGN). The span at 138-160 (PTDDESSSEEEEEEEEGDNDIED) shows a compositional bias: acidic residues. The Helicase ATP-binding domain maps to 246–412 (VEAINENLVT…KLFPLLTPKV (167 aa)). 259–266 (GETGSGKT) contributes to the ATP binding site. A DEAH box motif is present at residues 355–358 (DEAH). Positions 463–703 (EVKQLITKLK…QLVLHLKSMN (241 aa)) constitute a Helicase C-terminal domain.

Belongs to the DEAD box helicase family. DEAH subfamily.

The catalysed reaction is ATP + H2O = ADP + phosphate + H(+). Functionally, probable ATP-binding RNA helicase. This chain is Putative ATP-dependent RNA helicase rha-2 (rha-2), found in Caenorhabditis elegans.